The primary structure comprises 627 residues: E3 ubiquitin-protein ligase DTX1 (627 aa).

WWE domains follow at residues G14–R94 and N95–R171. 3 disordered regions span residues Q222–V254, P269–V327, and P368–N398. Composition is skewed to pro residues over residues P230–P248 and E275–P287. An SH3-binding motif is present at residues P240–L243. Over residues P296–A314 the composition is skewed to polar residues. Residues R386–S396 are compositionally biased toward basic residues. The RING-type zinc finger occupies C418–K479.

This sequence belongs to the Deltex family. As to quaternary structure, homodimer. May form a heterodimer with other members of the Deltex family. Interacts with NOTCH1 via its N-terminal region and EIF3F, the interaction is required for NOTCH1 deubiquitination. Interacts with EP300. Forms a heterodimer with BBAP; the heterodimerization leading to an increase of in vitro ubiquitin ligase activity. Interacts with ITCH. Post-translationally, ubiquitinated; undergoes 'Lys-29'-linked polyubiquitination catalyzed by ITCH. Predominantly expressed in the brain and testis. Weakly expressed in the thymus, spleen and ovary. Predominantly expressed in regions containing post-mitotic differentiating neurons.

It localises to the cytoplasm. It is found in the nucleus. It carries out the reaction S-ubiquitinyl-[E2 ubiquitin-conjugating enzyme]-L-cysteine + [acceptor protein]-L-lysine = [E2 ubiquitin-conjugating enzyme]-L-cysteine + N(6)-ubiquitinyl-[acceptor protein]-L-lysine.. It participates in protein modification; protein ubiquitination. In terms of biological role, regulator of Notch signaling, a signaling pathway involved in cell-cell communications that regulates a broad spectrum of cell-fate determinations. Mainly acts as a positive regulator of Notch, but it also acts as a negative regulator, depending on the developmental and cell context. Mediates the antineural activity of Notch, possibly by inhibiting the transcriptional activation mediated by MATCH1. Involved in neurogenesis, lymphogenesis and myogenesis, and may also be involved in MZB (Marginal zone B) cell differentiation. Promotes B-cell development at the expense of T-cell development, suggesting that it can antagonize NOTCH1. Functions as an ubiquitin ligase protein in vivo, mediating ubiquitination and promoting degradation of MEKK1, suggesting that it may regulate the Notch pathway via some ubiquitin ligase activity. This is E3 ubiquitin-protein ligase DTX1 (Dtx1) from Mus musculus (Mouse).